We begin with the raw amino-acid sequence, 286 residues long: Bifunctional protein FolD (286 aa).

Residues 165–167 (GRS), S190, and V231 each bind NADP(+).

It belongs to the tetrahydrofolate dehydrogenase/cyclohydrolase family. Homodimer.

The catalysed reaction is (6R)-5,10-methylene-5,6,7,8-tetrahydrofolate + NADP(+) = (6R)-5,10-methenyltetrahydrofolate + NADPH. It carries out the reaction (6R)-5,10-methenyltetrahydrofolate + H2O = (6R)-10-formyltetrahydrofolate + H(+). Its pathway is one-carbon metabolism; tetrahydrofolate interconversion. In terms of biological role, catalyzes the oxidation of 5,10-methylenetetrahydrofolate to 5,10-methenyltetrahydrofolate and then the hydrolysis of 5,10-methenyltetrahydrofolate to 10-formyltetrahydrofolate. This Bacillus cereus (strain ZK / E33L) protein is Bifunctional protein FolD.